The following is a 740-amino-acid chain: E3 ubiquitin-protein ligase DTX3L (740 aa).

Ala-2 is modified (N-acetylalanine). Ser-9 is modified (phosphoserine). 3 disordered regions span residues 96 to 119 (NTRPQISSLTQSQAETPSGDMHQH), 195 to 231 (SEQKQQFSPSMTERKPLSQQERDSCISPSEPETKAEQ), and 524 to 551 (HETPMDIDSDDSKAASPPLKGSVSSEAS). 2 stretches are compositionally biased toward polar residues: residues 98 to 111 (RPQISSLTQSQAET) and 195 to 205 (SEQKQQFSPSM). Ser-202 carries the phosphoserine modification. The span at 206–218 (TERKPLSQQERDS) shows a compositional bias: basic and acidic residues. Residues Ser-221, Ser-532, and Ser-539 each carry the phosphoserine modification. An RING-type zinc finger spans residues 561-600 (CVICMDTISNKKVLPKCKHEFCAPCINKAMSYKPICPTCQ).

The protein belongs to the Deltex family. Homodimer and heterodimer. Can heterodimerize with DTX1, enhancing its ubiquitin ligase activity in vitro. Interacts (via N-terminus) with ADP ribosyltransferase PARP9/BAL1 (via PARP catalytic domain) forming a stable complex; the interaction is required to activate PARP9 but is dispensable for DTX3L catalytic activity. Forms a complex with STAT1 and PARP9 independently of IFNB1 or IFNG-mediated STAT1 'Tyr-701' phosphorylation. Found in a complex with PARP9, STAT1 and H2BC9. Found in a complex with E3 ligase ITCH and ESCRT-0 components HGS and STAM. Interacts (via C-terminus) with ITCH; the interaction is increased upon CXCL12 stimulation and inhibits ITCH catalytic activity; the interaction is direct. Interacts with HGS and STAM; the interaction brings together HGS and STAM and promotes their recruitment to early endosomes. As to quaternary structure, (Microbial infection) Interacts with encephalomyocarditis virus (EMCV) C3 protease; the interaction results in C3 protease 'Lys-48'-linked ubiquitination. In terms of assembly, (Microbial infection) Interacts with human rhinovirus (HRV) C3 protease; the interaction results in C3 protease 'Lys-48'-linked ubiquitination. Autoubiquitinated.

Its subcellular location is the cytoplasm. It is found in the nucleus. The protein resides in the early endosome membrane. It localises to the lysosome membrane. It carries out the reaction S-ubiquitinyl-[E2 ubiquitin-conjugating enzyme]-L-cysteine + [acceptor protein]-L-lysine = [E2 ubiquitin-conjugating enzyme]-L-cysteine + N(6)-ubiquitinyl-[acceptor protein]-L-lysine.. It functions in the pathway protein modification; protein ubiquitination. Its activity is regulated as follows. Binding to PARP9 enhances DTX3L catalytic activity. Its function is as follows. E3 ubiquitin-protein ligase which, in association with ADP-ribosyltransferase PARP9, plays a role in DNA damage repair and in interferon-mediated antiviral responses. Monoubiquitinates several histones, including histone H2A, H2B, H3 and H4. In response to DNA damage, mediates monoubiquitination of 'Lys-91' of histone H4 (H4K91ub1). The exact role of H4K91ub1 in DNA damage response is still unclear but it may function as a licensing signal for additional histone H4 post-translational modifications such as H4 'Lys-20' methylation (H4K20me). PARP1-dependent PARP9-DTX3L-mediated ubiquitination promotes the rapid and specific recruitment of 53BP1/TP53BP1, UIMC1/RAP80, and BRCA1 to DNA damage sites. By monoubiquitinating histone H2B H2BC9/H2BJ and thereby promoting chromatin remodeling, positively regulates STAT1-dependent interferon-stimulated gene transcription and thus STAT1-mediated control of viral replication. Independently of its catalytic activity, promotes the sorting of chemokine receptor CXCR4 from early endosome to lysosome following CXCL12 stimulation by reducing E3 ligase ITCH activity and thus ITCH-mediated ubiquitination of endosomal sorting complex required for transport ESCRT-0 components HGS and STAM. In addition, required for the recruitment of HGS and STAM to early endosomes. In association with PARP9, plays a role in antiviral responses by mediating 'Lys-48'-linked ubiquitination of encephalomyocarditis virus (EMCV) and human rhinovirus (HRV) C3 proteases and thus promoting their proteasomal-mediated degradation. This is E3 ubiquitin-protein ligase DTX3L (DTX3L) from Homo sapiens (Human).